The chain runs to 279 residues: MRPAIKIGIIGGSGLDDSQILESRSEKVVSTHFGNPSDVLIEGKIAGVDCVLLARHGRNHSIMPSNVNYRANIWALKTVGCTHVIVSTATGSLQERIHPGDLVIPDNFIDRTTKRAQTFYDGNDMLVGVCHVPMEPAFCSRTREVLIETAKELGLVGVHNKGTVVTIEGPRFSSKAESNLFRQWGADLVNMTLVPEVVLAKEAGLCYAAIAMATDYDCWRDCGENVNVADVMATFKKNVTKVTQLITAVIPKIAEMDWTETIGELTKTVNGSIMLPHAY.

Residues Ser-13, 55–56 (RH), and 88–89 (TA) each bind phosphate. Met-191 lines the substrate pocket. Thr-192 provides a ligand contact to phosphate. 215-217 (DYD) serves as a coordination point for substrate.

It belongs to the PNP/MTAP phosphorylase family. MTAP subfamily. In terms of assembly, homotrimer.

The protein resides in the cytoplasm. The protein localises to the nucleus. It catalyses the reaction S-methyl-5'-thioadenosine + phosphate = 5-(methylsulfanyl)-alpha-D-ribose 1-phosphate + adenine. It functions in the pathway amino-acid biosynthesis; L-methionine biosynthesis via salvage pathway; S-methyl-5-thio-alpha-D-ribose 1-phosphate from S-methyl-5'-thioadenosine (phosphorylase route): step 1/1. Its function is as follows. Catalyzes the reversible phosphorylation of S-methyl-5'-thioadenosine (MTA) to adenine and 5-methylthioribose-1-phosphate. Involved in the breakdown of MTA, a major by-product of polyamine biosynthesis. Responsible for the first step in the methionine salvage pathway after MTA has been generated from S-adenosylmethionine. Has broad substrate specificity with 6-aminopurine nucleosides as preferred substrates. In Aedes aegypti (Yellowfever mosquito), this protein is S-methyl-5'-thioadenosine phosphorylase.